Here is a 507-residue protein sequence, read N- to C-terminus: Archaeal-type glutamate synthase [NADPH] (507 aa).

2 consecutive 4Fe-4S ferredoxin-type domains span residues 10–39 and 41–70; these read FVVE…YDEN and NRVY…VRKN. Residues Cys19, Cys22, Cys25, Cys29, Cys50, Cys53, Cys56, and Cys60 each contribute to the [4Fe-4S] cluster site.

It belongs to the glutamate synthase family. The cofactor is FMN.

The catalysed reaction is 2 L-glutamate + NADP(+) = L-glutamine + 2-oxoglutarate + NADPH + H(+). This chain is Archaeal-type glutamate synthase [NADPH], found in Thermotoga maritima (strain ATCC 43589 / DSM 3109 / JCM 10099 / NBRC 100826 / MSB8).